The sequence spans 406 residues: Putative colanic acid biosynthesis glycosyltransferase WcaL (406 aa).

The protein belongs to the glycosyltransferase group 1 family. Glycosyltransferase 4 subfamily.

It participates in slime biogenesis; slime polysaccharide biosynthesis. This is Putative colanic acid biosynthesis glycosyltransferase WcaL (wcaL) from Escherichia coli (strain K12).